We begin with the raw amino-acid sequence, 218 residues long: Large ribosomal subunit protein uL3 (218 aa).

Belongs to the universal ribosomal protein uL3 family. Part of the 50S ribosomal subunit. Forms a cluster with proteins L14 and L19.

Functionally, one of the primary rRNA binding proteins, it binds directly near the 3'-end of the 23S rRNA, where it nucleates assembly of the 50S subunit. In Corynebacterium jeikeium (strain K411), this protein is Large ribosomal subunit protein uL3.